We begin with the raw amino-acid sequence, 385 residues long: 1-deoxy-D-xylulose 5-phosphate reductoisomerase 1 (385 aa).

NADPH is bound by residues threonine 11, glycine 12, serine 13, isoleucine 14, asparagine 39, and asparagine 122. Position 123 (lysine 123) interacts with 1-deoxy-D-xylulose 5-phosphate. Glutamate 124 is an NADPH binding site. Aspartate 148 contributes to the Mn(2+) binding site. 1-deoxy-D-xylulose 5-phosphate contacts are provided by serine 149, glutamate 150, serine 174, and histidine 197. Glutamate 150 is a Mn(2+) binding site. Glycine 203 is an NADPH binding site. 1-deoxy-D-xylulose 5-phosphate is bound by residues serine 210, asparagine 215, lysine 216, and glutamate 219. Residue glutamate 219 coordinates Mn(2+).

This sequence belongs to the DXR family. Mg(2+) is required as a cofactor. It depends on Mn(2+) as a cofactor.

The catalysed reaction is 2-C-methyl-D-erythritol 4-phosphate + NADP(+) = 1-deoxy-D-xylulose 5-phosphate + NADPH + H(+). It participates in isoprenoid biosynthesis; isopentenyl diphosphate biosynthesis via DXP pathway; isopentenyl diphosphate from 1-deoxy-D-xylulose 5-phosphate: step 1/6. Catalyzes the NADPH-dependent rearrangement and reduction of 1-deoxy-D-xylulose-5-phosphate (DXP) to 2-C-methyl-D-erythritol 4-phosphate (MEP). The chain is 1-deoxy-D-xylulose 5-phosphate reductoisomerase 1 from Bacillus cereus (strain ATCC 14579 / DSM 31 / CCUG 7414 / JCM 2152 / NBRC 15305 / NCIMB 9373 / NCTC 2599 / NRRL B-3711).